A 160-amino-acid polypeptide reads, in one-letter code: 6,7-dimethyl-8-ribityllumazine synthase (160 aa).

Residues Phe23, 61–63 (SFE), and 85–87 (AVI) each bind 5-amino-6-(D-ribitylamino)uracil. Residue 90–91 (DT) coordinates (2S)-2-hydroxy-3-oxobutyl phosphate. The active-site Proton donor is His93. Residue Phe118 coordinates 5-amino-6-(D-ribitylamino)uracil. Residue Arg132 coordinates (2S)-2-hydroxy-3-oxobutyl phosphate.

It belongs to the DMRL synthase family.

The enzyme catalyses (2S)-2-hydroxy-3-oxobutyl phosphate + 5-amino-6-(D-ribitylamino)uracil = 6,7-dimethyl-8-(1-D-ribityl)lumazine + phosphate + 2 H2O + H(+). Its pathway is cofactor biosynthesis; riboflavin biosynthesis; riboflavin from 2-hydroxy-3-oxobutyl phosphate and 5-amino-6-(D-ribitylamino)uracil: step 1/2. In terms of biological role, catalyzes the formation of 6,7-dimethyl-8-ribityllumazine by condensation of 5-amino-6-(D-ribitylamino)uracil with 3,4-dihydroxy-2-butanone 4-phosphate. This is the penultimate step in the biosynthesis of riboflavin. The chain is 6,7-dimethyl-8-ribityllumazine synthase from Synechococcus sp. (strain CC9605).